A 184-amino-acid polypeptide reads, in one-letter code: Acetyl-CoA decarbonylase/synthase complex subunit epsilon 1 (184 aa).

Belongs to the CdhB family. Heterotetramer of two alpha and two epsilon subunits. The ACDS complex is made up of alpha, epsilon, beta, gamma and delta subunits with a probable stoichiometry of (alpha(2)epsilon(2))(4)-beta(8)-(gamma(1)delta(1))(8).

Part of a complex that catalyzes the reversible cleavage of acetyl-CoA, allowing autotrophic growth from CO(2). The alpha-epsilon subcomponent functions as a carbon monoxide dehydrogenase. The precise role of the epsilon subunit is unclear; it may have a stabilizing role within the alpha(2)epsilon(2) component and/or be involved in electron transfer to FAD during a potential FAD-mediated CO oxidation. The polypeptide is Acetyl-CoA decarbonylase/synthase complex subunit epsilon 1 (cdhB1) (Archaeoglobus fulgidus (strain ATCC 49558 / DSM 4304 / JCM 9628 / NBRC 100126 / VC-16)).